The chain runs to 366 residues: Phospho-N-acetylmuramoyl-pentapeptide-transferase (366 aa).

Helical transmembrane passes span 27–47 (AALF…INSL), 71–91 (TPTM…LLWA), 93–113 (LSNV…AIGF), 134–154 (LGIE…TALA), 174–194 (FLIN…VGAG), 205–225 (GLAI…AYLA), 245–265 (LAVV…FNAP), 268–288 (AIFM…TVAV), 294–314 (IVMA…IIQV), and 343–363 (QVVI…LSTL).

This sequence belongs to the glycosyltransferase 4 family. MraY subfamily. It depends on Mg(2+) as a cofactor.

Its subcellular location is the cell inner membrane. It carries out the reaction UDP-N-acetyl-alpha-D-muramoyl-L-alanyl-gamma-D-glutamyl-meso-2,6-diaminopimeloyl-D-alanyl-D-alanine + di-trans,octa-cis-undecaprenyl phosphate = di-trans,octa-cis-undecaprenyl diphospho-N-acetyl-alpha-D-muramoyl-L-alanyl-D-glutamyl-meso-2,6-diaminopimeloyl-D-alanyl-D-alanine + UMP. It functions in the pathway cell wall biogenesis; peptidoglycan biosynthesis. Catalyzes the initial step of the lipid cycle reactions in the biosynthesis of the cell wall peptidoglycan: transfers peptidoglycan precursor phospho-MurNAc-pentapeptide from UDP-MurNAc-pentapeptide onto the lipid carrier undecaprenyl phosphate, yielding undecaprenyl-pyrophosphoryl-MurNAc-pentapeptide, known as lipid I. This is Phospho-N-acetylmuramoyl-pentapeptide-transferase from Rhizobium etli (strain ATCC 51251 / DSM 11541 / JCM 21823 / NBRC 15573 / CFN 42).